A 225-amino-acid polypeptide reads, in one-letter code: Protein-L-isoaspartate O-methyltransferase (225 aa).

Ser-75 is a catalytic residue.

The protein belongs to the methyltransferase superfamily. L-isoaspartyl/D-aspartyl protein methyltransferase family.

It is found in the cytoplasm. It catalyses the reaction [protein]-L-isoaspartate + S-adenosyl-L-methionine = [protein]-L-isoaspartate alpha-methyl ester + S-adenosyl-L-homocysteine. Catalyzes the methyl esterification of L-isoaspartyl residues in peptides and proteins that result from spontaneous decomposition of normal L-aspartyl and L-asparaginyl residues. It plays a role in the repair and/or degradation of damaged proteins. This chain is Protein-L-isoaspartate O-methyltransferase, found in Xanthomonas axonopodis pv. citri (strain 306).